The chain runs to 313 residues: Solute carrier family 25 member 36 (313 aa).

Solcar repeat units follow at residues 4–110, 118–205, and 226–310; these read RDTL…CKEK, DSTQ…IKRK, and SDFV…VVYL. Helical transmembrane passes span 7-27, 41-57, 113-133, 182-202, 228-248, and 293-313; these read LVHL…TCPL, LYIS…ASVN, NIFN…AGFT, MSAS…YESI, FVGM…IAYP, and QIPN…LLDG.

This sequence belongs to the mitochondrial carrier (TC 2.A.29) family.

The protein localises to the mitochondrion inner membrane. Functionally, mitochondrial transporter that imports/exports pyrimidine nucleotides into and from mitochondria. Transports preferentially cytosine and uracil (deoxy)nucleoside mono-, di-, and triphosphates by uniport and antiport mechanism. This is Solute carrier family 25 member 36 (SLC25A36) from Gallus gallus (Chicken).